Consider the following 140-residue polypeptide: UPF0336 protein TW736 (140 aa).

Belongs to the UPF0336 family.

The polypeptide is UPF0336 protein TW736 (Tropheryma whipplei (strain TW08/27) (Whipple's bacillus)).